An 883-amino-acid chain; its full sequence is Mitogen-activated protein kinase kinase kinase YODA (883 aa).

Disordered regions lie at residues 28 to 193 (GFAS…AEMF), 303 to 364 (CSPE…PPLL), and 376 to 396 (SAATSPSVPRSPARAEATVSP). The span at 57 to 72 (SRLPSRSPSPSTRVSR) shows a compositional bias: low complexity. Residues 94–105 (VTSTDSGMNGSQ) show a composition bias toward polar residues. Residues 143-165 (SVSSGSSVGDIPSDSLLSPLASD) show a composition bias toward low complexity. Polar residues-rich tracts occupy residues 167–189 (ENGNRTPVNISSRDQSMHSNKNS) and 314–328 (RMTSPGPSSRIQSGA). The region spanning 400-656 (WKKGRLLGMG…AAQLLDHAFV (257 aa)) is the Protein kinase domain. ATP is bound by residues 406-414 (LGMGSFGHV) and Lys-429. Catalysis depends on Asp-525, which acts as the Proton acceptor. Disordered stretches follow at residues 712–773 (GSGF…GAIP) and 787–838 (EGIG…IQPG). Over residues 733–756 (SPIFHSHSPHISGRRSPSPISSPH) the composition is skewed to low complexity.

Belongs to the protein kinase superfamily. STE Ser/Thr protein kinase family. MAP kinase kinase kinase subfamily. As to quaternary structure, interacts with ASK7. Interacts with BSK12/SSP. Binds to BASL and MPK6. In terms of tissue distribution, expressed in roots, leaves, guard cells, stems, flowers and siliques.

The protein localises to the cytoplasm. It is found in the cell cortex. Its subcellular location is the cell membrane. It carries out the reaction L-seryl-[protein] + ATP = O-phospho-L-seryl-[protein] + ADP + H(+). It catalyses the reaction L-threonyl-[protein] + ATP = O-phospho-L-threonyl-[protein] + ADP + H(+). Its activity is regulated as follows. Contains an N-terminal autoinhibitory domain. Its function is as follows. Functions in a MAP kinase cascade that acts as a molecular switch to regulate the first cell fate decisions in the zygote and the early embryo. Promotes elongation of the zygote and development of its basal daughter cell into the extra-embryonic suspensor. In stomatal development, acts downstream of the LRR receptor TMM, but upstream of the MKK4/MKK5-MPK3/MPK6 module to regulate stomatal cell fate before the guard mother cell (GMC) is specified. Plays a central role in both guard cell identity and pattern formation. This MAPK cascade also functions downstream of the ER receptor in regulating coordinated local cell proliferation, which shapes the morphology of plant organs. Upon brassinosteroid signaling, is inhibited by phosphorylation of its auto-inhibitory N-terminal domain by the GSK3-like kinase ASK7. The protein is Mitogen-activated protein kinase kinase kinase YODA of Arabidopsis thaliana (Mouse-ear cress).